We begin with the raw amino-acid sequence, 171 residues long: Putative metal-dependent hydrolase BH0277 (171 aa).

Residues H64, H155, and H159 each contribute to the Zn(2+) site.

Belongs to the metal hydrolase YfiT family. As to quaternary structure, homodimer. Zn(2+) is required as a cofactor.

The protein resides in the cytoplasm. In terms of biological role, possible metal-dependent hydrolase. This is Putative metal-dependent hydrolase BH0277 from Halalkalibacterium halodurans (strain ATCC BAA-125 / DSM 18197 / FERM 7344 / JCM 9153 / C-125) (Bacillus halodurans).